We begin with the raw amino-acid sequence, 1020 residues long: MKRFRRHGHESQRDKHKQDLYQFNKTVEHGFPHQPSALGFSPSLELLAIGTRSGAIKLYGAPGVEFMGLHDENAAVTQVHFLPNQVELVTLLEDNSLHMWTLRAHNSMCELLEIGRFTLSGPPGAIPSVTRVTAVLAHSSGELLLLGTEGGHVFVVEVPGFRELEENNISVEDVQNRVPEDYVGRRNLESVETLHENPLNPRQVLIGYSRGLMVLWDLDRQRPVQHFLGTQQLESVWWMEDGESILSSHSDGSYCQWTVTGEDPQTEPEKQETPYGAFPCKAISKIIQLPSKQGPPFLIFSGGMPRASYGDRHCISVIHSKTHEALDFTSRIIDFFVIREGENHKGEPSALVVLVEEELVVVDLQTEGWPVIQTPYLVPLHCSAITCSHHVSSIPLKLWERVQAAGAHQNTHYSRKPWPINGGKNLAPDPPQRDLLLTGHEDGTVRFWDASGVCLYPMYKLSTAGVFHTDADPNDNMNQGSEGEWPPFRKVGCFDPYSDDPRLGIQKIHLCKYSGYLTVAGTAGQILVLELNDEAAEQMVEATVVDLLQGQEGFRWKGQARLDVREEPVLFPPGFQPFALVQCQPPAVVTAIALHSEWKLVGFGTSHGFGLYDYNQRNNIMVKCTLNPSDQMAMEGPLSRVKSIKKSLRQSFRRIRRSRVSMRKHHTNNAAKLQEINARLEAEALQEMELAPVQRKIEARSSDDSFTGLVRTLYFADTFVSDSSHSTPSLWAGTNGGAVFAYVLRVPPQERRAEDPVTAHAAKEIQLMHRAPVVGLVVLDGKGAPLPEPLEVAHDLARSPEMHGSHHLLVVSEEQFKLFTLPKVSSKSKLKLTAVDGSRVRRVGVAWFGSRTDEQLESCLVVLTNQGELHVISLPSIKMLVHYPCIRREDVSGIASCVFTKYGQGFYLISPSEFERFSLSTRWVVQPHCLVEPPLQMRSKSPSSPVHRDLPDGVPTEHRNFKGDSEGYENSARQVMEHALLNDESVLQEIQKSLEGDQTTFLENNLKTKPKAGNVLSNGD.

WD repeat units follow at residues 36 to 69 (SALG…FMGL), 76 to 117 (VTQV…IGRF), 132 to 169 (VTAV…ENNI), 193 to 227 (TLHE…VQHF), 233 to 264 (LESV…GEDP), 282 to 324 (AISK…KTHE), 332 to 364 (IIDF…VVDL), 386 to 462 (TCSH…YKLS), 506 to 581 (QKIH…FALV), 590 to 651 (TAIA…LRQS), 710 to 766 (VRTL…KEIQ), 775 to 827 (GLVV…VSSK), 832 to 884 (LTAV…VHYP), and 898 to 921 (VFTK…SLST). Positions 935–968 (LQMRSKSPSSPVHRDLPDGVPTEHRNFKGDSEGY) are disordered. Positions 946–965 (VHRDLPDGVPTEHRNFKGDS) are enriched in basic and acidic residues.

This sequence belongs to the WD repeat L(2)GL family. Phosphorylated.

It localises to the cytoplasm. It is found in the cytoskeleton. Essential for hemidesmosome formation and maintenance of the cytoskeleton elements as well as cellular morphology in the basal epidermis during development. Also involved in regulating growth of the basal epidermis. The sequence is that of LLGL scribble cell polarity complex component 2 (llgl2) from Danio rerio (Zebrafish).